A 391-amino-acid chain; its full sequence is Probable tRNA sulfurtransferase (391 aa).

Residues 60 to 167 enclose the THUMP domain; the sequence is DEIIDHIKKV…KDNCYVYTDR (108 aa). Residues 185 to 186, 210 to 211, Arg-267, Gly-289, and Gln-298 each bind ATP; these read LL and HF.

This sequence belongs to the ThiI family.

Its subcellular location is the cytoplasm. The catalysed reaction is [ThiI sulfur-carrier protein]-S-sulfanyl-L-cysteine + a uridine in tRNA + 2 reduced [2Fe-2S]-[ferredoxin] + ATP + H(+) = [ThiI sulfur-carrier protein]-L-cysteine + a 4-thiouridine in tRNA + 2 oxidized [2Fe-2S]-[ferredoxin] + AMP + diphosphate. It catalyses the reaction [ThiS sulfur-carrier protein]-C-terminal Gly-Gly-AMP + S-sulfanyl-L-cysteinyl-[cysteine desulfurase] + AH2 = [ThiS sulfur-carrier protein]-C-terminal-Gly-aminoethanethioate + L-cysteinyl-[cysteine desulfurase] + A + AMP + 2 H(+). It functions in the pathway cofactor biosynthesis; thiamine diphosphate biosynthesis. Catalyzes the ATP-dependent transfer of a sulfur to tRNA to produce 4-thiouridine in position 8 of tRNAs, which functions as a near-UV photosensor. Also catalyzes the transfer of sulfur to the sulfur carrier protein ThiS, forming ThiS-thiocarboxylate. This is a step in the synthesis of thiazole, in the thiamine biosynthesis pathway. The sulfur is donated as persulfide by IscS. This Finegoldia magna (strain ATCC 29328 / DSM 20472 / WAL 2508) (Peptostreptococcus magnus) protein is Probable tRNA sulfurtransferase.